The following is a 753-amino-acid chain: 5-methyltetrahydropteroyltriglutamate--homocysteine methyltransferase (753 aa).

5-methyltetrahydropteroyltri-L-glutamate is bound by residues 17–20 (RELK) and lysine 117. L-homocysteine is bound by residues 431-433 (IGS) and glutamate 484. Residues 431–433 (IGS) and glutamate 484 contribute to the L-methionine site. 5-methyltetrahydropteroyltri-L-glutamate-binding positions include 515-516 (RC) and tryptophan 561. Residue aspartate 599 coordinates L-homocysteine. Aspartate 599 contacts L-methionine. A 5-methyltetrahydropteroyltri-L-glutamate-binding site is contributed by glutamate 605. Zn(2+)-binding residues include histidine 641, cysteine 643, and glutamate 665. Histidine 694 acts as the Proton donor in catalysis. Cysteine 726 contacts Zn(2+).

This sequence belongs to the vitamin-B12 independent methionine synthase family. It depends on Zn(2+) as a cofactor.

It carries out the reaction 5-methyltetrahydropteroyltri-L-glutamate + L-homocysteine = tetrahydropteroyltri-L-glutamate + L-methionine. It participates in amino-acid biosynthesis; L-methionine biosynthesis via de novo pathway; L-methionine from L-homocysteine (MetE route): step 1/1. In terms of biological role, catalyzes the transfer of a methyl group from 5-methyltetrahydrofolate to homocysteine resulting in methionine formation. This is 5-methyltetrahydropteroyltriglutamate--homocysteine methyltransferase from Escherichia coli O139:H28 (strain E24377A / ETEC).